The sequence spans 534 residues: Pentatricopeptide repeat-containing protein At2g20540 (534 aa).

11 PPR repeats span residues 41-71, 72-106, 108-142, 143-173, 174-208, 209-239, 240-274, 275-305, 306-340, 341-371, and 377-407; these read SSFM…VSNP, NVFL…SFEL, DRFT…GPRF, HVVT…MYER, DVIS…TIVS, WTAM…GIEP, DEIS…GFLK, QTGV…MEGK, DVIS…KVKP, NGIT…MRQD, and KIEH…MPMK. The type E motif stretch occupies residues 412–487; that stretch reads IWGSLLSSCR…TPGGSLIEVN (76 aa). The interval 488–518 is type E(+) motif; sequence NIVQEFVSGDNSKPFWTEISIVLQLFTSHQD.

The protein belongs to the PPR family. PCMP-E subfamily.

This Arabidopsis thaliana (Mouse-ear cress) protein is Pentatricopeptide repeat-containing protein At2g20540 (PCMP-E78).